A 106-amino-acid chain; its full sequence is uncharacterized protein (106 aa).

The next 2 membrane-spanning stretches (helical) occupy residues 43–63 (CSTI…LAIV) and 86–106 (IPEL…FSLF).

The protein resides in the membrane. This is an uncharacterized protein from Saccharomyces cerevisiae (strain ATCC 204508 / S288c) (Baker's yeast).